Here is a 101-residue protein sequence, read N- to C-terminus: MAIKIKVEFLGGLDIISNSVREHKCVIPFEEGEATVADLITYITKNIISDPKDIPVFIEDGTVRPGILVLINDTDWELEGMEEYVIESGDVFTFTSTLHGG.

A 1-thioglycine modification is found at glycine 101. Glycine 101 is covalently cross-linked (Glycyl lysine isopeptide (Gly-Lys) (interchain with K-? in acceptor proteins)).

It belongs to the URM1 family. C-terminal thiocarboxylation occurs in 2 steps, it is first acyl-adenylated (-COAMP) via the hesA/moeB/thiF part of UBA4, then thiocarboxylated (-COSH) via the rhodanese domain of UBA4.

Its subcellular location is the cytoplasm. It participates in tRNA modification; 5-methoxycarbonylmethyl-2-thiouridine-tRNA biosynthesis. In terms of biological role, acts as a sulfur carrier required for 2-thiolation of mcm(5)S(2)U at tRNA wobble positions of cytosolic tRNA(Lys), tRNA(Glu) and tRNA(Gln). Serves as sulfur donor in tRNA 2-thiolation reaction by being thiocarboxylated (-COSH) at its C-terminus by the MOCS3 homolog UBA4. The sulfur is then transferred to tRNA to form 2-thiolation of mcm(5)S(2)U. Prior mcm(5) tRNA modification by the elongator complex is required for 2-thiolation. Also acts as a ubiquitin-like protein (UBL) that is covalently conjugated via an isopeptide bond to lysine residues of target proteins such as AHP1. The thiocarboxylated form serves as substrate for conjugation and oxidative stress specifically induces the formation of UBL-protein conjugates. In Candida albicans (strain SC5314 / ATCC MYA-2876) (Yeast), this protein is Ubiquitin-related modifier 1.